A 158-amino-acid chain; its full sequence is Transcriptional repressor NrdR (158 aa).

A zinc finger lies at 3 to 34 (CPFCNSEETRVIDTRLTDDGHVVRRRRECEHC). The ATP-cone domain maps to 49–139 (IFVVKKGGQR…VYKEFRDLDH (91 aa)).

It belongs to the NrdR family. Zn(2+) is required as a cofactor.

Negatively regulates transcription of bacterial ribonucleotide reductase nrd genes and operons by binding to NrdR-boxes. This is Transcriptional repressor NrdR from Kosmotoga olearia (strain ATCC BAA-1733 / DSM 21960 / TBF 19.5.1).